The sequence spans 367 residues: UDP-N-acetylglucosamine--N-acetylmuramyl-(pentapeptide) pyrophosphoryl-undecaprenol N-acetylglucosamine transferase (367 aa).

Residues Thr-15–Gly-17, Asn-126, Arg-169, Ser-197, and Gln-298 each bind UDP-N-acetyl-alpha-D-glucosamine.

The protein belongs to the glycosyltransferase 28 family. MurG subfamily.

Its subcellular location is the cell inner membrane. The catalysed reaction is di-trans,octa-cis-undecaprenyl diphospho-N-acetyl-alpha-D-muramoyl-L-alanyl-D-glutamyl-meso-2,6-diaminopimeloyl-D-alanyl-D-alanine + UDP-N-acetyl-alpha-D-glucosamine = di-trans,octa-cis-undecaprenyl diphospho-[N-acetyl-alpha-D-glucosaminyl-(1-&gt;4)]-N-acetyl-alpha-D-muramoyl-L-alanyl-D-glutamyl-meso-2,6-diaminopimeloyl-D-alanyl-D-alanine + UDP + H(+). Its pathway is cell wall biogenesis; peptidoglycan biosynthesis. In terms of biological role, cell wall formation. Catalyzes the transfer of a GlcNAc subunit on undecaprenyl-pyrophosphoryl-MurNAc-pentapeptide (lipid intermediate I) to form undecaprenyl-pyrophosphoryl-MurNAc-(pentapeptide)GlcNAc (lipid intermediate II). This Bradyrhizobium sp. (strain ORS 278) protein is UDP-N-acetylglucosamine--N-acetylmuramyl-(pentapeptide) pyrophosphoryl-undecaprenol N-acetylglucosamine transferase.